We begin with the raw amino-acid sequence, 109 residues long: Putative membrane protein insertion efficiency factor (109 aa).

The protein belongs to the UPF0161 family.

It localises to the cell inner membrane. Its function is as follows. Could be involved in insertion of integral membrane proteins into the membrane. The polypeptide is Putative membrane protein insertion efficiency factor (Rhodopseudomonas palustris (strain BisB18)).